The chain runs to 293 residues: Transcriptional regulator ICP22 homolog (293 aa).

2 disordered regions span residues 1 to 49 (MPHG…QRID) and 175 to 293 (RFLE…SARR). Low complexity predominate over residues 21 to 31 (TPSTSPLIPSL). The span at 190–210 (EECDVSGDESPSEEEEEDEAS) shows a compositional bias: acidic residues. The segment covering 272 to 281 (AAKKRRKRQP) has biased composition (basic residues). The span at 282-293 (PKGERPTKSARR) shows a compositional bias: basic and acidic residues.

It belongs to the herpesviridae ICP22 family.

The protein is Transcriptional regulator ICP22 homolog (IR4) of Equus caballus (Horse).